The primary structure comprises 190 residues: uncharacterized protein (190 aa).

This sequence to Synechocystis PCC 6803 sll1609 and slr1290.

This is an uncharacterized protein from Synechocystis sp. (strain ATCC 27184 / PCC 6803 / Kazusa).